A 689-amino-acid polypeptide reads, in one-letter code: Transcription factor BHLH42 (689 aa).

Disordered stretches follow at residues 192-287 and 458-489; these read IDHH…NPRV and DDNN…ANHV. Over residues 206–217 the composition is skewed to polar residues; that stretch reads EHSTSNLATSSV. Residues 246-271 are compositionally biased toward acidic residues; the sequence is EEQEQEQEEDEDDDDDDDDEEEAESD. The interval 483 to 496 is basic motif; it reads ELSANHVLAERRRR. The 50-residue stretch at 483–532 folds into the bHLH domain; sequence ELSANHVLAERRRREKLNERFIILRSLVPFVTKMDKASILGDTIEYVKQL. The interval 497–532 is helix-loop-helix motif; sequence EKLNERFIILRSLVPFVTKMDKASILGDTIEYVKQL. The interval 547–570 is disordered; it reads EIDQRSRSSGDPQRSGAKAATDKR.

The protein belongs to the bHLH protein family. In terms of assembly, interacts with MYB123. Expressed in the inner pericarp of maturing fruits.

It is found in the nucleus. In terms of biological role, transcription activator involved in the spatiotemporal regulation of anthocyanin biosynthesis specifically in the inner pericarp of red-fleshed kiwifruits. Functions in association with MYB123 to activate the promoters of LDOX (ANS) and F3GT1 that encode the dedicated enzymes for anthocyanin biosynthesis. The polypeptide is Transcription factor BHLH42 (Actinidia chinensis var. chinensis (Chinese soft-hair kiwi)).